A 481-amino-acid chain; its full sequence is Putative F-box/FBD/LRR-repeat protein At5g25850 (481 aa).

An F-box domain is found at 19–69 (INRLSQLSDPLICQILSHLPIKEVVTTSVLSTRWKNIWLSVPSLELIYSIF). LRR repeat units follow at residues 123–151 (VRRV…KLFH), 173–198 (VWFP…KIDV), and 328–356 (HVTL…IVAF). Residues 401–452 (QLSFSSVPKCLLSSLQFVELNAQILRFDGEILNLAKYFLENSSILQKLTLHP) enclose the FBD domain.

This Arabidopsis thaliana (Mouse-ear cress) protein is Putative F-box/FBD/LRR-repeat protein At5g25850.